An 84-amino-acid polypeptide reads, in one-letter code: Sulfur carrier protein TusA (84 aa).

Cysteine 21 serves as the catalytic Cysteine persulfide intermediate.

It belongs to the sulfur carrier protein TusA family.

The protein resides in the cytoplasm. In terms of biological role, sulfur carrier protein which probably makes part of a sulfur-relay system. This chain is Sulfur carrier protein TusA, found in Pseudomonas syringae pv. syringae (strain B728a).